We begin with the raw amino-acid sequence, 553 residues long: Undecaprenyl phosphate-alpha-4-amino-4-deoxy-L-arabinose arabinosyl transferase (553 aa).

12 consecutive transmembrane segments (helical) span residues 8-28 (LVLL…RALW), 83-103 (VRFG…WLAF), 111-131 (VAVL…VGTY), 132-152 (AVLD…FWLG), 176-196 (VMTK…PWVI), 204-224 (VLLF…PWAL), 255-275 (APFW…VALL), 288-308 (IESG…FFSI), 317-337 (ILPC…QLVA), 350-370 (TVFG…WGIA), 380-400 (VLKV…GYLT), and 407-427 (LWQW…GMIP).

Belongs to the glycosyltransferase 83 family.

The protein resides in the cell inner membrane. It carries out the reaction 4-amino-4-deoxy-alpha-L-arabinopyranosyl di-trans,octa-cis-undecaprenyl phosphate + lipid IVA = lipid IIA + di-trans,octa-cis-undecaprenyl phosphate.. It participates in lipopolysaccharide metabolism; 4-amino-4-deoxy-beta-L-arabinose-lipid A biosynthesis. Its function is as follows. Catalyzes the transfer of the L-Ara4N moiety of the glycolipid undecaprenyl phosphate-alpha-L-Ara4N to lipid A. The modified arabinose is attached to lipid A and is required for resistance to polymyxin and cationic antimicrobial peptides. In Enterobacter sp. (strain 638), this protein is Undecaprenyl phosphate-alpha-4-amino-4-deoxy-L-arabinose arabinosyl transferase.